A 514-amino-acid chain; its full sequence is Cytochrome c-552 (514 aa).

A signal peptide spans 1-21 (MKFKLLLAGSLVAVGAMALLA). His101, Cys129, Cys132, Lys133, Cys167, Cys170, His171, Cys210, Cys213, and His214 together coordinate heme c. Positions 216, 217, 279, and 281 each coordinate Ca(2+). Tyr217 provides a ligand contact to substrate. A substrate-binding site is contributed by His282. Heme c is bound by residues His293, Cys300, Cys303, His304, His318, Cys332, Cys335, His336, and His411.

The protein belongs to the cytochrome c-552 family. In terms of assembly, homodimer. Probably also exists as a membrane-associated heterooligomeric complex. It depends on Ca(2+) as a cofactor. The cofactor is heme c.

It localises to the periplasm. The enzyme catalyses 6 Fe(III)-[cytochrome c] + NH4(+) + 2 H2O = 6 Fe(II)-[cytochrome c] + nitrite + 8 H(+). It functions in the pathway nitrogen metabolism; nitrate reduction (assimilation). Catalyzes the reduction of nitrite to ammonia, consuming six electrons in the process. Has very low activity toward hydroxylamine, and even lower activity toward sulfite. Sulfite reductase activity is maximal at neutral pH. In Sulfurospirillum deleyianum, this protein is Cytochrome c-552 (nrfA).